The sequence spans 2049 residues: Polyglutamine-repeat protein pqn-41 (2049 aa).

Positions 1–58 (MKPKKLQQGSDSAHTSDTESTKTCEKTAKKLPKTQKKLQKSKKTAKKRRDEEFRIFFP) are disordered. The segment at 1-1601 (MKPKKLQQGS…TTSQHQQSIQ (1601 aa)) is sufficient to prevent linker cell death. Residues 14–28 (HTSDTESTKTCEKTA) are compositionally biased toward basic and acidic residues. A compositionally biased stretch (basic residues) spans 29 to 47 (KKLPKTQKKLQKSKKTAKK). Coiled coils occupy residues 264–302 (RRQEKAENLRIFQEKQKRLQEQQEDAEWEQIEAQRANSD) and 396–432 (TNAGEYEEQEIELERRRLEEEERDQNDKKLEIEDRNH). Residues 459 to 492 (RGRNSTENSDSESSSEASEPPDDVITKEEPTDFS) form a disordered region. The segment covering 463-476 (STENSDSESSSEAS) has biased composition (low complexity). Coiled-coil stretches lie at residues 686-730 (ESFE…SFET), 756-796 (ISAD…REFS), and 822-880 (QSSI…ARKL). Positions 1134–1150 (QQQHNHQNFQQQQQGNH) are enriched in low complexity. Disordered regions lie at residues 1134 to 1198 (QQQH…ENAA), 1236 to 1265 (AAAAKRPASETPPNGLPKVPRHDEQQQQQN), 1481 to 1616 (YKQS…GAAY), and 1636 to 1661 (ATPKPPVVRPPSAATQQQPVSVTSQA). The span at 1162-1171 (QKRKYTKRKA) shows a compositional bias: basic residues. Polar residues predominate over residues 1176–1194 (AVASSSDQNGMKSPGSSAM). Residues 1495 to 1533 (STSSSSAAPASAPAPRAGAGAGATSSSAASSSTSTPSSS) are compositionally biased toward low complexity. The span at 1534–1546 (SHHKKSSPPHHQK) shows a compositional bias: basic residues. Low complexity-rich tracts occupy residues 1569-1604 (SAPIVGAPRQGATPQAAPATTPATTSQHQQSIQFSQ) and 1649-1661 (ATQQQPVSVTSQA). 2 coiled-coil regions span residues 1659–1685 (SQASQQQQQFQQIQQQRAAAIAAAAAA) and 1725–1801 (QQYL…LQNI). Residues 1836–1858 (AQAQQAPPTSQPSQAATPQQQQQ) are disordered. 2 coiled-coil regions span residues 1863 to 1961 (RQME…AAAA) and 1991 to 2041 (SAQQ…AQQK).

Expressed in the linker cell just before it dies.

It localises to the cytoplasm. Its function is as follows. In males, required for non-apoptotic death of the linker cell once it has finished guiding gonad elongation at the end of larval development. May be involved in nuclear envelope crenellation in the linker cell. In terms of biological role, in males, promotes linker cell survival. The sequence is that of Polyglutamine-repeat protein pqn-41 from Caenorhabditis elegans.